The primary structure comprises 69 residues: Large ribosomal subunit protein bL31 (69 aa).

Zn(2+) is bound by residues cysteine 16, cysteine 18, cysteine 36, and cysteine 39.

The protein belongs to the bacterial ribosomal protein bL31 family. Type A subfamily. Part of the 50S ribosomal subunit. The cofactor is Zn(2+).

Binds the 23S rRNA. This chain is Large ribosomal subunit protein bL31, found in Thermosipho africanus (strain TCF52B).